Here is a 180-residue protein sequence, read N- to C-terminus: ATP synthase subunit delta (180 aa).

Belongs to the ATPase delta chain family. As to quaternary structure, F-type ATPases have 2 components, F(1) - the catalytic core - and F(0) - the membrane proton channel. F(1) has five subunits: alpha(3), beta(3), gamma(1), delta(1), epsilon(1). F(0) has three main subunits: a(1), b(2) and c(10-14). The alpha and beta chains form an alternating ring which encloses part of the gamma chain. F(1) is attached to F(0) by a central stalk formed by the gamma and epsilon chains, while a peripheral stalk is formed by the delta and b chains.

Its subcellular location is the cell inner membrane. In terms of biological role, f(1)F(0) ATP synthase produces ATP from ADP in the presence of a proton or sodium gradient. F-type ATPases consist of two structural domains, F(1) containing the extramembraneous catalytic core and F(0) containing the membrane proton channel, linked together by a central stalk and a peripheral stalk. During catalysis, ATP synthesis in the catalytic domain of F(1) is coupled via a rotary mechanism of the central stalk subunits to proton translocation. Functionally, this protein is part of the stalk that links CF(0) to CF(1). It either transmits conformational changes from CF(0) to CF(1) or is implicated in proton conduction. This chain is ATP synthase subunit delta, found in Cupriavidus metallidurans (strain ATCC 43123 / DSM 2839 / NBRC 102507 / CH34) (Ralstonia metallidurans).